Consider the following 131-residue polypeptide: Large ribosomal subunit protein bL12 (131 aa).

The segment covering 99–125 (ESTPKPIKEGTNKDDAEETKKKLEEAG) has biased composition (basic and acidic residues). The segment at 99–131 (ESTPKPIKEGTNKDDAEETKKKLEEAGAKVTVK) is disordered.

The protein belongs to the bacterial ribosomal protein bL12 family. In terms of assembly, homodimer. Part of the ribosomal stalk of the 50S ribosomal subunit. Forms a multimeric L10(L12)X complex, where L10 forms an elongated spine to which 2 to 4 L12 dimers bind in a sequential fashion. Binds GTP-bound translation factors.

In terms of biological role, forms part of the ribosomal stalk which helps the ribosome interact with GTP-bound translation factors. Is thus essential for accurate translation. This Gloeothece citriformis (strain PCC 7424) (Cyanothece sp. (strain PCC 7424)) protein is Large ribosomal subunit protein bL12.